Consider the following 151-residue polypeptide: MSKDGINSKDFLIGTLIGGIIGATTALFLAPKSGKELRDDLGSQAVALRDKTDKMTADAKEKGTQYVSIAKDKTSNITQLVADQSGQIMNKVKDLRDRSKSDKTDSSTAMQDMREEAMQAADETKDQVLQTKEDVKDELKDAQKQAEQLNR.

The disordered stretch occupies residues 89–151 (MNKVKDLRDR…AQKQAEQLNR (63 aa)). 2 stretches are compositionally biased toward basic and acidic residues: residues 91 to 105 (KVKD…DKTD) and 112 to 151 (DMRE…QLNR).

To C.plantagineum desiccation-related protein clone PCC3-06.

This is an uncharacterized protein from Bacillus subtilis (strain 168).